A 720-amino-acid polypeptide reads, in one-letter code: Mitogen-activated protein kinase 6 (720 aa).

Residue methionine 1 forms a Peptide (Met-Gly) (interchain with G-Cter in ubiquitin) linkage. Residues 20-316 enclose the Protein kinase domain; that stretch reads YMDLKPLGCG…AEEALSHPYM (297 aa). Residues 26–34 and lysine 49 contribute to the ATP site; that span reads LGCGGNGLV. Aspartate 152 (proton acceptor) is an active-site residue. At serine 189 the chain carries Phosphoserine; by PAK1, PAK2 and PAK3. The SEG motif signature appears at 189–191; that stretch reads SEG. The FRIEDE motif motif lies at 332–337; that stretch reads FHIEDE. Phosphoserine is present on residues serine 386, serine 452, serine 554, and serine 556. The interval 638-657 is disordered; it reads SEMLETEPVEEGKRGERGRE. Over residues 647 to 657 the composition is skewed to basic and acidic residues; it reads EEGKRGERGRE. Residue serine 683 is modified to Phosphoserine. The span at 698–714 shows a compositional bias: polar residues; sequence PSAMKSSPQIPHKTYSN. Residues 698 to 720 are disordered; it reads PSAMKSSPQIPHKTYSNILKHLN.

Belongs to the protein kinase superfamily. CMGC Ser/Thr protein kinase family. MAP kinase subfamily. Heterodimer with ERK4/MAPK4. Interacts with (via FRIEDE motif) MAPKAPK5. Interacts with UBE3A; this interaction may be indirect and mediated by HERC2, possibly via HERC2 interaction with NEURL4. Mg(2+) is required as a cofactor. In terms of processing, phosphorylated at Ser-189 by PAK1, PAK2 and PAK3 resulting in catalytic activation. Phosphorylated by MAPKAPK5 at other sites. Ubiquitination at Met-1 leads to degradation by the proteasome pathway. In terms of tissue distribution, highest levels within the nervous system, expressed in different tissues, mostly in skeletal muscle.

The protein resides in the cytoplasm. It is found in the nucleus. The catalysed reaction is L-seryl-[protein] + ATP = O-phospho-L-seryl-[protein] + ADP + H(+). It carries out the reaction L-threonyl-[protein] + ATP = O-phospho-L-threonyl-[protein] + ADP + H(+). Its activity is regulated as follows. Activated by phosphorylation at Ser-189. Its function is as follows. Atypical MAPK protein. Phosphorylates microtubule-associated protein 2 (MAP2) and MAPKAPK5. The precise role of the complex formed with MAPKAPK5 is still unclear, but the complex follows a complex set of phosphorylation events: upon interaction with atypical MAPKAPK5, ERK3/MAPK6 is phosphorylated at Ser-189 and then mediates phosphorylation and activation of MAPKAPK5, which in turn phosphorylates ERK3/MAPK6. May promote entry in the cell cycle. The polypeptide is Mitogen-activated protein kinase 6 (Mapk6) (Rattus norvegicus (Rat)).